Consider the following 422-residue polypeptide: Serine--tRNA ligase (422 aa).

Residue 229 to 231 (TAE) coordinates L-serine. An ATP-binding site is contributed by 260–262 (RKE). E283 is an L-serine binding site. Residue 347 to 350 (EISS) coordinates ATP. S383 provides a ligand contact to L-serine.

It belongs to the class-II aminoacyl-tRNA synthetase family. Type-1 seryl-tRNA synthetase subfamily. In terms of assembly, homodimer. The tRNA molecule binds across the dimer.

It localises to the cytoplasm. It catalyses the reaction tRNA(Ser) + L-serine + ATP = L-seryl-tRNA(Ser) + AMP + diphosphate + H(+). It carries out the reaction tRNA(Sec) + L-serine + ATP = L-seryl-tRNA(Sec) + AMP + diphosphate + H(+). It functions in the pathway aminoacyl-tRNA biosynthesis; selenocysteinyl-tRNA(Sec) biosynthesis; L-seryl-tRNA(Sec) from L-serine and tRNA(Sec): step 1/1. Its function is as follows. Catalyzes the attachment of serine to tRNA(Ser). Is also able to aminoacylate tRNA(Sec) with serine, to form the misacylated tRNA L-seryl-tRNA(Sec), which will be further converted into selenocysteinyl-tRNA(Sec). The protein is Serine--tRNA ligase of Geobacter sp. (strain M21).